Consider the following 298-residue polypeptide: Protoheme IX farnesyltransferase (298 aa).

A run of 9 helical transmembrane segments spans residues Leu-23 to Tyr-43, Leu-47 to Phe-67, Val-93 to Asn-113, His-115 to Leu-135, Ile-143 to Gly-163, Ala-169 to Thr-189, Ile-211 to Leu-231, Val-236 to Ala-256, and Met-278 to Ser-298.

This sequence belongs to the UbiA prenyltransferase family. Protoheme IX farnesyltransferase subfamily.

It localises to the cell membrane. The catalysed reaction is heme b + (2E,6E)-farnesyl diphosphate + H2O = Fe(II)-heme o + diphosphate. Its pathway is porphyrin-containing compound metabolism; heme O biosynthesis; heme O from protoheme: step 1/1. Functionally, converts heme B (protoheme IX) to heme O by substitution of the vinyl group on carbon 2 of heme B porphyrin ring with a hydroxyethyl farnesyl side group. This Hyperthermus butylicus (strain DSM 5456 / JCM 9403 / PLM1-5) protein is Protoheme IX farnesyltransferase.